The primary structure comprises 378 residues: Uroporphyrinogen decarboxylase (378 aa).

Residues 40-44 (RQAGR), aspartate 90, tyrosine 167, serine 222, and histidine 355 each bind substrate.

This sequence belongs to the uroporphyrinogen decarboxylase family. In terms of assembly, homodimer.

Its subcellular location is the cytoplasm. The enzyme catalyses uroporphyrinogen III + 4 H(+) = coproporphyrinogen III + 4 CO2. The protein operates within porphyrin-containing compound metabolism; protoporphyrin-IX biosynthesis; coproporphyrinogen-III from 5-aminolevulinate: step 4/4. Catalyzes the decarboxylation of four acetate groups of uroporphyrinogen-III to yield coproporphyrinogen-III. This is Uroporphyrinogen decarboxylase from Psychrobacter arcticus (strain DSM 17307 / VKM B-2377 / 273-4).